A 377-amino-acid polypeptide reads, in one-letter code: cAMP-dependent protein kinase type II regulatory subunit (377 aa).

A compositionally biased stretch (polar residues) spans 48 to 69; it reads ERPSVSHTDQSTDDQLSVNSQD. Residues 48–78 form a disordered region; the sequence is ERPSVSHTDQSTDDQLSVNSQDADAEPPVMA. Phosphoserine is present on residues S51, S58, S64, S67, and S84. The Pseudophosphorylation motif signature appears at 81–85; sequence RRKSV. Position 90 is a phosphotyrosine (Y90). 3',5'-cyclic AMP contacts are provided by residues 124–239, E189, R198, 242–362, E311, and R320; these read LFRS…LLNS and MLKA…YESQ.

It belongs to the cAMP-dependent kinase regulatory chain family. As to quaternary structure, tetramer, composed of 2 regulatory (R) and 2 catalytic (C) subunits. In the presence of cAMP it dissociates into 2 active monomeric C subunits and an R dimer. Interacts with Akap200. Post-translationally, the pseudophosphorylation site binds to the substrate-binding region of the catalytic chain but is not phosphorylated. The physiological significance of phosphorylations by other kinases is unclear. As to expression, detected in follicle cells, germline-derived cells, germline line stem cells and outer rim of ring canals of nurse cells throughout oogenesis (at protein level).

It localises to the cytoplasm. It is found in the cell membrane. Functionally, regulatory subunit of the cAMP-dependent protein kinases involved in cAMP signaling in cells. Mediates membrane association by binding to anchoring proteins, such as Akap200. Might play an essential role in the regulation of neuronal activity in the brain. This chain is cAMP-dependent protein kinase type II regulatory subunit (Pka-R2), found in Drosophila melanogaster (Fruit fly).